We begin with the raw amino-acid sequence, 703 residues long: Ubiquitin-like modifier-activating enzyme ATG7 (703 aa).

Alanine 2 bears the N-acetylalanine mark. Positions 15–17 (FAP) match the FAP motif motif. A Glycyl lysine isopeptide (Lys-Gly) (interchain with G-Cter in ubiquitin) cross-link involves residue lysine 45. Cysteine 572 serves as the catalytic Glycyl thioester intermediate. At serine 698 the chain carries Phosphoserine.

Belongs to the ATG7 family. In terms of assembly, homodimer. Interacts with ATG3; this interaction is essential for the transfer of ATG8-like proteins's thioester from ATG7 to ATG3 and plays a role in the conjugation of ATG12 to ATG5. Interacts with ATG12. Forms intermediate conjugates with GABARAPL1. Forms intermediate conjugates with ATG8-like proteins such as GABARAP, GABARAPL2 or MAP1LC3A. Interacts with EP300 acetyltransferase. Interacts with FOXO1. Post-translationally, acetylated by EP300. In terms of processing, polyubiquitinated on Lys-45 via 'Lys-63'-linked ubiquitin by TRIM32; this modification positiely regulates ATG8 and ATG12 activating enzyme activity leading to initiation of autophagy under metabolic stress. Widely expressed, especially in kidney, liver, lymph nodes and bone marrow.

The protein resides in the cytoplasm. The protein localises to the preautophagosomal structure. Functionally, E1-like activating enzyme involved in the 2 ubiquitin-like systems required for cytoplasm to vacuole transport (Cvt) and autophagy. Activates ATG12 for its conjugation with ATG5 as well as the ATG8 family proteins for their conjugation with phosphatidylethanolamine. Both systems are needed for the ATG8 association to Cvt vesicles and autophagosomes membranes. Required for autophagic death induced by caspase-8 inhibition. Facilitates LC3-I lipidation with phosphatidylethanolamine to form LC3-II which is found on autophagosomal membranes. Required for mitophagy which contributes to regulate mitochondrial quantity and quality by eliminating the mitochondria to a basal level to fulfill cellular energy requirements and preventing excess ROS production. Modulates p53/TP53 activity to regulate cell cycle and survival during metabolic stress. Also plays a key role in the maintenance of axonal homeostasis, the prevention of axonal degeneration, the maintenance of hematopoietic stem cells, the formation of Paneth cell granules, as well as in adipose differentiation. Plays a role in regulating the liver clock and glucose metabolism by mediating the autophagic degradation of CRY1 (clock repressor) in a time-dependent manner. This is Ubiquitin-like modifier-activating enzyme ATG7 from Homo sapiens (Human).